The sequence spans 488 residues: E3 ubiquitin-protein ligase TRIM39 (488 aa).

The segment at 29-70 adopts an RING-type zinc-finger fold; it reads CSVCLEYLKEPVIIECGHNFCKACITRWWEDLERDFPCPVCR. The B box-type zinc finger occupies 102–143; it reads RDESLCSQHHEPLSLFCYEDQEAVCLICAISHTHRAHTVVPM. Zn(2+)-binding residues include C107, H110, C129, and H135. Residues 181-250 are a coiled coil; it reads ELKRLVESRR…AHLAAEVEGK (70 aa). Interaction with CDKN1A regions lie at residues 268 to 307 and 359 to 488; these read KCEKVKTMEVTSVSIELEKNFSHFPRQYFALRKILKQLIA and TSGR…TDWE. Residues 289 to 484 enclose the B30.2/SPRY domain; it reads SHFPRQYFAL…NAAPLTIRPP (196 aa).

Belongs to the TRIM/RBCC family. As to quaternary structure, interacts with MOAP1. Interacts with CDKN1A. Autoubiquitinated.

The protein localises to the cytoplasm. Its subcellular location is the cytosol. The protein resides in the mitochondrion. It is found in the nucleus. It carries out the reaction S-ubiquitinyl-[E2 ubiquitin-conjugating enzyme]-L-cysteine + [acceptor protein]-L-lysine = [E2 ubiquitin-conjugating enzyme]-L-cysteine + N(6)-ubiquitinyl-[acceptor protein]-L-lysine.. It functions in the pathway protein modification; protein ubiquitination. In terms of biological role, E3 ubiquitin-protein ligase. May facilitate apoptosis by inhibiting APC/C-Cdh1-mediated poly-ubiquitination and subsequent proteasome-mediated degradation of the pro-apoptotic protein MOAP1. Regulates the G1/S transition of the cell cycle and DNA damage-induced G2 arrest by stabilizing CDKN1A/p21. Positively regulates CDKN1A/p21 stability by competing with DTL for CDKN1A/p21 binding, therefore disrupting DCX(DTL) E3 ubiquitin ligase complex-mediated CDKN1A/p21 ubiquitination and degradation. This chain is E3 ubiquitin-protein ligase TRIM39 (Trim39), found in Rattus norvegicus (Rat).